The chain runs to 337 residues: Glyceraldehyde-3-phosphate dehydrogenase (337 aa).

NAD(+) is bound by residues 12–13, Asp-36, Arg-80, and Ser-122; that span reads RI. Residues 153 to 155 and Thr-184 each bind D-glyceraldehyde 3-phosphate; that span reads SCT. Cys-154 serves as the catalytic Nucleophile. Asn-185 serves as a coordination point for NAD(+). Residues Arg-199, 212–213, and Arg-235 each bind D-glyceraldehyde 3-phosphate; that span reads TG. Asn-318 serves as a coordination point for NAD(+).

The protein belongs to the glyceraldehyde-3-phosphate dehydrogenase family. In terms of assembly, homotetramer.

It localises to the cytoplasm. It catalyses the reaction D-glyceraldehyde 3-phosphate + phosphate + NAD(+) = (2R)-3-phospho-glyceroyl phosphate + NADH + H(+). It participates in carbohydrate degradation; glycolysis; pyruvate from D-glyceraldehyde 3-phosphate: step 1/5. Functionally, catalyzes the oxidative phosphorylation of glyceraldehyde 3-phosphate (G3P) to 1,3-bisphosphoglycerate (BPG) using the cofactor NAD. The first reaction step involves the formation of a hemiacetal intermediate between G3P and a cysteine residue, and this hemiacetal intermediate is then oxidized to a thioester, with concomitant reduction of NAD to NADH. The reduced NADH is then exchanged with the second NAD, and the thioester is attacked by a nucleophilic inorganic phosphate to produce BPG. The polypeptide is Glyceraldehyde-3-phosphate dehydrogenase (gap) (Zymomonas mobilis subsp. mobilis (strain ATCC 31821 / ZM4 / CP4)).